Reading from the N-terminus, the 299-residue chain is MAADAPHPAFEGYATEAVPQAAVGSPGKDGVLELTFERTADGTTLVHDYATVPFHISGTLGYDPLPEADTVFIQSPTGGVAQGDRHDVSITVGDEAVAHVSTQSSTKVQTMTCNYAAADTTLSVGAGGHLDYVPEPTILHADSRYLQELSVDLAPGATAVVSDVVVPGRLARGERFEFERYLSRVRATGPDGHLFEDATHLTPGDEDPTAPGVLGEFTVYGTTFVLAPDHDEAELSDALHAVVTDGDARAGATALPNGAGVAVRALGDRAETVQATLHAAWDHARIELLDAPAPSGRKY.

This sequence belongs to the UreD family. UreD, UreF and UreG form a complex that acts as a GTP-hydrolysis-dependent molecular chaperone, activating the urease apoprotein by helping to assemble the nickel containing metallocenter of UreC. The UreE protein probably delivers the nickel.

It is found in the cytoplasm. Its function is as follows. Required for maturation of urease via the functional incorporation of the urease nickel metallocenter. The sequence is that of Urease accessory protein UreD from Haloarcula marismortui (strain ATCC 43049 / DSM 3752 / JCM 8966 / VKM B-1809) (Halobacterium marismortui).